Here is a 395-residue protein sequence, read N- to C-terminus: Acetate kinase (395 aa).

Asn-8 serves as a coordination point for Mg(2+). Residue Lys-15 coordinates ATP. Arg-89 serves as a coordination point for substrate. The active-site Proton donor/acceptor is Asp-146. ATP-binding positions include 206-210, 281-283, and 329-333; these read HLGNG, DLR, and GIGEN. Glu-382 contacts Mg(2+).

The protein belongs to the acetokinase family. As to quaternary structure, homodimer. Requires Mg(2+) as cofactor. It depends on Mn(2+) as a cofactor.

The protein localises to the cytoplasm. The enzyme catalyses acetate + ATP = acetyl phosphate + ADP. The protein operates within metabolic intermediate biosynthesis; acetyl-CoA biosynthesis; acetyl-CoA from acetate: step 1/2. Its activity is regulated as follows. Induced by glucose excess, the induction may be mediated by CcpA transcriptional regulator. Functionally, catalyzes the formation of acetyl phosphate from acetate and ATP. Can also catalyze the reverse reaction. Appears to favor the formation of acetate. Involved in the secretion of excess carbohydrate. The polypeptide is Acetate kinase (Bacillus subtilis (strain 168)).